We begin with the raw amino-acid sequence, 187 residues long: Phosphatidylethanolamine-binding protein 1 (187 aa).

The residue at position 2 (Ala-2) is an N-acetylalanine; in peptide hippocampal cholinergic neurostimulating. A phosphoserine mark is found at Ser-6 and Ser-13. A Phosphothreonine modification is found at Thr-42. Residues Ser-52, Ser-54, Ser-98, and Ser-153 each carry the phosphoserine modification. The interaction with RAF1 stretch occupies residues 93–134; that stretch reads KGNDISSGTVLSEYVGSGPPKDTGLHRYVWLVYEQEQPLNCD.

Belongs to the phosphatidylethanolamine-binding protein family. In terms of assembly, has a tendency to form dimers by disulfide cross-linking. Interacts with RAF1 and this interaction is enhanced if RAF1 is phosphorylated on residues 'Ser-338', 'Ser-339', 'Tyr-340' and 'Tyr-341'. Interacts with ALOX15; in response to IL13/interleukin-13, prevents the interaction of PEBP1 with RAF1 to activate the ERK signaling cascade. Major component of epididymal secretions and sperm plasma membranes. It is present in cytosols from a variety of other tissues. Highly expressed in brain.

It localises to the cytoplasm. The protein resides in the membrane. Binds ATP, opioids and phosphatidylethanolamine. Has lower affinity for phosphatidylinositol and phosphatidylcholine. Serine protease inhibitor which inhibits thrombin, neuropsin and chymotrypsin but not trypsin, tissue type plasminogen activator and elastase. Inhibits the kinase activity of RAF1 by inhibiting its activation and by dissociating the RAF1/MEK complex and acting as a competitive inhibitor of MEK phosphorylation. In terms of biological role, HCNP may be involved in the function of the presynaptic cholinergic neurons of the central nervous system. HCNP increases the production of choline acetyltransferase but not acetylcholinesterase. Seems to be mediated by a specific receptor. This is Phosphatidylethanolamine-binding protein 1 (Pebp1) from Rattus norvegicus (Rat).